The chain runs to 615 residues: Protein DBF4 homolog B (615 aa).

One can recognise a BRCT domain in the interval 43–133 (ARKHPFSGKS…DPKGSHPRPS (91 aa)). 2 disordered regions span residues 93–141 (REVK…DSVP) and 264–293 (FEAP…AHTM). The segment covering 275–284 (HTRESKDGEP) has biased composition (basic and acidic residues). The segment at 294 to 343 (PRRKKGYCECCQEAFEELHVHLQSAQHRSFALEAHLYAEVDRIIAQLSHS) adopts a DBF4-type zinc-finger fold. Positions 301, 304, 314, and 320 each coordinate Zn(2+). Residues 371–407 (TLHPHQPSHPRAASPRIRKEDSCQASVTQGRAAGQQR) are disordered.

Forms a complex with CDC7. Note that CDC7 forms distinct complex either with DBF4/DBF4A or DBF4B. Such complexes are stable upon replication stress. Post-translationally, phosphorylated. Widely expressed. Highly expressed in testis.

The protein resides in the nucleus. Its function is as follows. Regulatory subunit for CDC7 which activates its kinase activity thereby playing a central role in DNA replication and cell proliferation. Required for progression of S and M phases. The complex CDC7-DBF4B selectively phosphorylates MCM2 subunit at 'Ser-40' and then is involved in regulating the initiation of DNA replication during cell cycle. This chain is Protein DBF4 homolog B (DBF4B), found in Homo sapiens (Human).